The chain runs to 234 residues: Glucosamine-6-phosphate deaminase (234 aa).

Aspartate 62 (proton acceptor; for enolization step) is an active-site residue. Asparagine 128 acts as the For ring-opening step in catalysis. Histidine 130 serves as the catalytic Proton acceptor; for ring-opening step. Glutamate 135 (for ring-opening step) is an active-site residue.

This sequence belongs to the glucosamine/galactosamine-6-phosphate isomerase family. NagB subfamily.

It catalyses the reaction alpha-D-glucosamine 6-phosphate + H2O = beta-D-fructose 6-phosphate + NH4(+). The protein operates within amino-sugar metabolism; N-acetylneuraminate degradation; D-fructose 6-phosphate from N-acetylneuraminate: step 5/5. Catalyzes the reversible isomerization-deamination of glucosamine 6-phosphate (GlcN6P) to form fructose 6-phosphate (Fru6P) and ammonium ion. The protein is Glucosamine-6-phosphate deaminase of Streptococcus pyogenes serotype M49 (strain NZ131).